The sequence spans 338 residues: 1-aminocyclopropane-1-carboxylate deaminase (338 aa).

K51 is subject to N6-(pyridoxal phosphate)lysine. S78 acts as the Nucleophile in catalysis.

Belongs to the ACC deaminase/D-cysteine desulfhydrase family. As to quaternary structure, homotrimer. The cofactor is pyridoxal 5'-phosphate.

The catalysed reaction is 1-aminocyclopropane-1-carboxylate + H2O = 2-oxobutanoate + NH4(+). In terms of biological role, catalyzes a cyclopropane ring-opening reaction, the irreversible conversion of 1-aminocyclopropane-1-carboxylate (ACC) to ammonia and alpha-ketobutyrate. Allows growth on ACC as a nitrogen source. The protein is 1-aminocyclopropane-1-carboxylate deaminase of Pseudomonas syringae pv. tomato (strain ATCC BAA-871 / DC3000).